A 990-amino-acid chain; its full sequence is Kinesin-related protein 5 (990 aa).

The Kinesin motor domain occupies 6–330; that stretch reads NIRVMCRFRP…LKFGARAKSI (325 aa). 83-90 is an ATP binding site; sequence GQTGSGKT. Disordered stretches follow at residues 401 to 485 and 732 to 788; these read QSNS…SSID and FSSS…QDQQ. Gly residues predominate over residues 406-418; that stretch reads SGGGGSGSSGGSS. Composition is skewed to low complexity over residues 466 to 485 and 733 to 781; these read TSSI…SSID and SSSN…PSSN. A coiled-coil region spans residues 513-948; sequence IEMEKMKEDT…DQLISTQRLI (436 aa).

It belongs to the TRAFAC class myosin-kinesin ATPase superfamily. Kinesin family. Kinesin subfamily. In terms of assembly, interacts with actin.

The protein resides in the cytoplasm. It localises to the cytoskeleton. Functionally, microtubule-associated force-producing protein that plays a role in organelle transport. Its motor activity is directed toward the microtubule's plus end. May connect microtubules to actin filaments. Associates with actin-based structures in cells and is likely involved in the organization of actin cytoskeletons in such structures. This is Kinesin-related protein 5 (kif5) from Dictyostelium discoideum (Social amoeba).